The following is a 145-amino-acid chain: 3-hydroxyacyl-[acyl-carrier-protein] dehydratase FabZ (145 aa).

The active site involves histidine 47.

It belongs to the thioester dehydratase family. FabZ subfamily.

The protein resides in the cytoplasm. It carries out the reaction a (3R)-hydroxyacyl-[ACP] = a (2E)-enoyl-[ACP] + H2O. Functionally, involved in unsaturated fatty acids biosynthesis. Catalyzes the dehydration of short chain beta-hydroxyacyl-ACPs and long chain saturated and unsaturated beta-hydroxyacyl-ACPs. This is 3-hydroxyacyl-[acyl-carrier-protein] dehydratase FabZ from Ruthia magnifica subsp. Calyptogena magnifica.